The primary structure comprises 196 residues: Aequorin-2 (196 aa).

The propeptide occupies 1–7 (MTSKQYS). 4 EF-hand domains span residues 18–53 (RWIGRHKHMFNFLDVNHNGKISLDEMVYKASDIVIN), 54–108 (NLGA…AKNE), 117–146 (DALFDIVDKDQNGAITLDEWKAYTKAAGII), and 147–182 (QSSEDCEETFRVCDIDESGQLDVDEMTRQHLGFWYT). Ca(2+)-binding residues include D31, N33, N35, K37, and E42. May interact with the chromophore regions lie at residues 47–57 (ASDIVINNLGA), 62–72 (AKRHKDAVEAF), and 107–117 (NEPTLIRIWGD). Residues D124, D126, N128, E135, D160, D162, S164, Q166, and E171 each contribute to the Ca(2+) site.

Belongs to the aequorin family. In terms of processing, the reduction of the disulfide bond is necessary to regenerate aequorin from apoaequorin.

Ca(2+)-dependent bioluminescence photoprotein. Displays an emission peak at 470 nm (blue light). Trace amounts of calcium ion trigger the intramolecular oxidation of the chromophore, coelenterazine into coelenteramide and CO(2) with the concomitant emission of light. The chain is Aequorin-2 from Aequorea victoria (Water jellyfish).